Reading from the N-terminus, the 1727-residue chain is DNA-directed RNA polymerase II subunit rpb1 (1727 aa).

Residues Cys66, Cys69, Cys76, His79, Cys106, Cys109, Cys147, and Cys175 each coordinate Zn(2+). Positions 486, 488, and 490 each coordinate Mg(2+). A bridging helix region spans residues 819–831 (PQEFFFHAMGGRE). Lys1266 is covalently cross-linked (Glycyl lysine isopeptide (Lys-Gly) (interchain with G-Cter in ubiquitin)). 2 disordered regions span residues 1478-1512 (EPSNVSYPDTPGSQTPSYSYGDGSTTPFHNPYDAP) and 1551-1727 (PTYS…NKKK). Over residues 1480-1505 (SNVSYPDTPGSQTPSYSYGDGSTTPF) the composition is skewed to polar residues. 23 tandem repeats follow at residues 1553 to 1559 (YSPTSPS), 1560 to 1566 (YSPTSPS), 1567 to 1573 (YSPTSPS), 1574 to 1580 (YSPTSPS), 1581 to 1587 (YSPTSPS), 1588 to 1594 (YSPTSPS), 1595 to 1601 (YSPTSPF), 1602 to 1608 (YSPTSPS), 1609 to 1615 (YSPTSPS), 1616 to 1622 (YSPTSPS), 1623 to 1629 (YSPTSPS), 1630 to 1636 (YSPTSPS), 1637 to 1643 (YSPTSPS), 1644 to 1650 (YSPTSPS), 1651 to 1657 (YSPTSPS), 1658 to 1664 (YSPTSPS), 1665 to 1671 (YSPTSPS), 1672 to 1678 (YSPTSPS), 1679 to 1685 (YSPTSPS), 1686 to 1692 (YSPSSPS), 1693 to 1699 (YSPSSPS), 1700 to 1706 (YSPSSPS), and 1707 to 1713 (YSPSSPT). Positions 1553–1713 (YSPTSPSYSP…SPSYSPSSPT (161 aa)) are C-terminal domain (CTD); 23 X 7 AA tandem repeats of Y-S-P-[ST]-S-P-[FST].

The protein belongs to the RNA polymerase beta' chain family. In terms of assembly, component of the RNA polymerase II (Pol II) complex consisting of 12 subunits. The tandem heptapeptide repeats in the C-terminal domain (CTD) can be highly phosphorylated. The phosphorylation activates Pol II. Phosphorylation occurs mainly at residues 'Ser-2' and 'Ser-5' of the heptapeptide repeat. The phosphorylation state is believed to result from the balanced action of site-specific CTD kinases and phosphatase, and a 'CTD code' that specifies the position of Pol II within the transcription cycle has been proposed. Post-translationally, following transcription stress, the elongating form of RNA polymerase II (RNA pol IIo) is polyubiquitinated via 'Lys-63'-linkages on Lys-1266 at DNA damage sites without leading to degradation: ubiquitination promotes RNA pol IIo backtracking to allow access by the transcription-coupled nucleotide excision repair (TC-NER) machinery. Subsequent DEF1-dependent polyubiquitination by the elongin complex via 'Lys-48'-linkages may lead to proteasome-mediated degradation; presumably at stalled RNA pol II where TC-NER has failed, to halt global transcription and enable 'last resort' DNA repair pathways.

It is found in the nucleus. The catalysed reaction is RNA(n) + a ribonucleoside 5'-triphosphate = RNA(n+1) + diphosphate. Its function is as follows. DNA-dependent RNA polymerase catalyzes the transcription of DNA into RNA using the four ribonucleoside triphosphates as substrates. Largest and catalytic component of RNA polymerase II which synthesizes mRNA precursors and many functional non-coding RNAs. Forms the polymerase active center together with the second largest subunit. Pol II is the central component of the basal RNA polymerase II transcription machinery. It is composed of mobile elements that move relative to each other. RPB1 is part of the core element with the central large cleft, the clamp element that moves to open and close the cleft and the jaws that are thought to grab the incoming DNA template. At the start of transcription, a single-stranded DNA template strand of the promoter is positioned within the central active site cleft of Pol II. A bridging helix emanates from RPB1 and crosses the cleft near the catalytic site and is thought to promote translocation of Pol II by acting as a ratchet that moves the RNA-DNA hybrid through the active site by switching from straight to bent conformations at each step of nucleotide addition. During transcription elongation, Pol II moves on the template as the transcript elongates. Elongation is influenced by the phosphorylation status of the C-terminal domain (CTD) of Pol II largest subunit (RPB1), which serves as a platform for assembly of factors that regulate transcription initiation, elongation, termination and mRNA processing. The sequence is that of DNA-directed RNA polymerase II subunit rpb1 (polr2a) from Dictyostelium discoideum (Social amoeba).